Here is a 132-residue protein sequence, read N- to C-terminus: Fatty acid-binding protein, brain (132 aa).

Position 2 is an N-acetylvaline (Val2). Position 127-129 (Arg127–Tyr129) interacts with a fatty acid.

The protein belongs to the calycin superfamily. Fatty-acid binding protein (FABP) family. Expressed in brain and other neural tissues.

It localises to the cytoplasm. In terms of biological role, B-FABP could be involved in the transport of a so far unknown hydrophobic ligand with potential morphogenic activity during CNS development. It is required for the establishment of the radial glial fiber system in developing brain, a system that is necessary for the migration of immature neurons to establish cortical layers. The protein is Fatty acid-binding protein, brain (Fabp7) of Mus musculus (Mouse).